The sequence spans 142 residues: MAPTTKASAAKKAALKGVNGKKALKVRTSTTFRLPKTLKLTRSPKYQRKSVPHYNRLDAHKIIVAPIATETAMKKVEDGNTLVFQVDIKSNKHQIKSAVKELYDVDALYVNTLIRPNGTKKAYIRLTSDYDALDIANRIGYI.

The protein belongs to the universal ribosomal protein uL23 family. As to quaternary structure, component of the large ribosomal subunit. Mature ribosomes consist of a small (40S) and a large (60S) subunit. The 40S subunit contains about 32 different proteins and 1 molecule of RNA (18S). The 60S subunit contains 45 different proteins and 3 molecules of RNA (25S, 5.8S and 5S).

Its subcellular location is the cytoplasm. Component of the ribosome, a large ribonucleoprotein complex responsible for the synthesis of proteins in the cell. The small ribosomal subunit (SSU) binds messenger RNAs (mRNAs) and translates the encoded message by selecting cognate aminoacyl-transfer RNA (tRNA) molecules. The large subunit (LSU) contains the ribosomal catalytic site termed the peptidyl transferase center (PTC), which catalyzes the formation of peptide bonds, thereby polymerizing the amino acids delivered by tRNAs into a polypeptide chain. The nascent polypeptides leave the ribosome through a tunnel in the LSU and interact with protein factors that function in enzymatic processing, targeting, and the membrane insertion of nascent chains at the exit of the ribosomal tunnel. RPL25 is a major component of the universal docking site for these factors at the polypeptide exit tunnel. In Candida albicans (strain SC5314 / ATCC MYA-2876) (Yeast), this protein is Large ribosomal subunit protein uL23.